The primary structure comprises 313 residues: Type II restriction enzyme BsuMI component YdiR (313 aa).

The interval 289-313 (FVSGDIVDENATTSSDDLPEDFENN) is disordered.

In terms of assembly, bsuMI restriction activity requires YdiR, YdiS and YdjA.

It carries out the reaction Endonucleolytic cleavage of DNA to give specific double-stranded fragments with terminal 5'-phosphates.. Its function is as follows. A P subtype restriction enzyme that recognizes the double-stranded sequence 5'-CTCGAG-3'; the cleavage site is unknown. The chain is Type II restriction enzyme BsuMI component YdiR (ydiR) from Bacillus subtilis (strain 168).